The chain runs to 501 residues: Solute carrier family 2, facilitated glucose transporter member 5 (501 aa).

The residue at position 1 (methionine 1) is an N-acetylmethionine. Residues 1 to 17 (MEEKHQEETGELTLVLA) lie on the Cytoplasmic side of the membrane. Residues 18–38 (LATLIAAFGSSFQYGYNVAAV) traverse the membrane as a helical segment. Tyrosine 31 is a binding site for D-fructose. Over 39-67 (NSPSEFMQQFYNDTYYDRNEENIESFTLT) the chain is Extracellular. N-linked (GlcNAc...) asparagine glycosylation occurs at asparagine 50. The helical transmembrane segment at 68–90 (LLWSLTVSMFPFGGFIGSLMVGT) threads the bilayer. Topologically, residues 91-97 (LVNKLGR) are cytoplasmic. The helical transmembrane segment at 98 to 118 (KGALLFNNIFSILPAILMGCS) threads the bilayer. At 119–125 (QIAQSFE) the chain is on the extracellular side. A helical membrane pass occupies residues 126–148 (LIIISRLLVGICAGISSNVVPMY). Residues 149–160 (LGELAPKNLRGA) lie on the Cytoplasmic side of the membrane. The chain crosses the membrane as a helical span at residues 161 to 181 (LGVVPQLFITVGILVAQLFGL). Residue glutamine 166 coordinates D-fructose. Residues 182–191 (RSLLANEDGW) lie on the Extracellular side of the membrane. Residues 192-212 (PVLLGLTGVPAGLQLLLLPFF) traverse the membrane as a helical segment. The Cytoplasmic segment spans residues 213-276 (PESPRYLLIQ…LFTMQSLRWQ (64 aa)). A helical membrane pass occupies residues 277 to 297 (LISMIVLMAGQQLSGVNAIYY). D-fructose is bound by residues glutamine 287 and 295-297 (IYY). Residues 298-312 (YADQIYLSAGVKSDD) lie on the Extracellular side of the membrane. A helical transmembrane segment spans residues 313–333 (VQYVTAGTGAVNVFMTILTIF). Over 334 to 341 (VVELWGRR) the chain is Cytoplasmic. A helical transmembrane segment spans residues 342–362 (FLLLVGFSTCLIACLVLTAAL). The Extracellular portion of the chain corresponds to 363–370 (ALQNTISW). A helical membrane pass occupies residues 371-393 (MPYISIVCVIVYVIGHALGPSPI). D-fructose is bound at residue histidine 386. The Cytoplasmic portion of the chain corresponds to 394 to 411 (PALLITEIFLQSSRPAAY). The chain crosses the membrane as a helical span at residues 412 to 432 (MIGGSVHWLSNFTVGLIFPFI). A D-fructose-binding site is contributed by 418–419 (HW). The Extracellular portion of the chain corresponds to 433-438 (QMGLGP). The chain crosses the membrane as a helical span at residues 439–459 (YSFIIFATICFLTTIYIFMVV). Topologically, residues 460 to 501 (PETKGRTFIEINQIFTMKNKVSDVYPKKEEELGALPHAILEQ) are cytoplasmic.

This sequence belongs to the major facilitator superfamily. Sugar transporter (TC 2.A.1.1) family. Glucose transporter subfamily. As to expression, detected at the apical membrane of villi in the jejunum. Detected in jejunum mucosa. Detected in epididymis and whole testis (at protein level). Detected in small intestine, kidney and testis. Detected in cochlea, but not in inner or outer cochlear hair cells.

It localises to the apical cell membrane. The protein resides in the cell membrane. The protein localises to the sarcolemma. The catalysed reaction is D-fructose(out) = D-fructose(in). With respect to regulation, fructose uptake is inhibited by cytochalasin B. Its function is as follows. Functions as a fructose transporter that has only low activity with other monosaccharides. Can mediate the uptake of deoxyglucose, but with low efficiency. Essential for fructose uptake in the small intestine. Plays a role in the regulation of salt uptake and blood pressure in response to dietary fructose. Required for the development of high blood pressure in response to high dietary fructose intake. This is Solute carrier family 2, facilitated glucose transporter member 5 from Mus musculus (Mouse).